Consider the following 262-residue polypeptide: MEIIPPRLKEPLYALYELRLRQGLTASESRLPRHIAVLCDGNRRWARDAGYDDVSYGYRMGAAKIAEMLRWCQEAGIEMTTVYLLSTENLQRDPDELAALIEIITDVVEEICAPANRWSVRTVGDLELLGEEPACRLRGAVESTPGVAPFHVNVAVGYGGRREIVGAVRALLGKELANGATAEELVEAVTVEGIARNLYTSGQPDPDLVIRTSGEQRLSGFLLWQSAYSEMWFTETHWPAFRRVDFLRALRDYSMRHRRYGK.

Asp40 is a catalytic residue. Asp40 provides a ligand contact to Mg(2+). Substrate contacts are provided by residues 41 to 44 (GNRR), Trp45, and 86 to 88 (STE). Asn89 (proton acceptor) is an active-site residue. Substrate-binding positions include Arg92, Arg211, and 217-219 (RLS). Glu230 provides a ligand contact to Mg(2+).

This sequence belongs to the UPP synthase family. Z-FPP synthase subfamily. Mg(2+) serves as cofactor.

It carries out the reaction isopentenyl diphosphate + (2E)-geranyl diphosphate = (2Z,6E)-farnesyl diphosphate + diphosphate. Its pathway is phospholipid metabolism; decaprenyl phosphate biosynthesis. Functionally, generates Z-farnesyl diphosphate (Z-FPP) from isopentenyl pyrophosphate (IPP). Z-FPP is the precursor of decaprenyl diphosphate, which has a central role in the biosynthesis of the mycobacterial cell wall. The protein is Short-chain Z-isoprenyl diphosphate synthase of Mycobacterium leprae (strain TN).